The following is a 121-amino-acid chain: Large ribosomal subunit protein bL20 (121 aa).

Belongs to the bacterial ribosomal protein bL20 family.

Functionally, binds directly to 23S ribosomal RNA and is necessary for the in vitro assembly process of the 50S ribosomal subunit. It is not involved in the protein synthesizing functions of that subunit. The chain is Large ribosomal subunit protein bL20 from Methylorubrum extorquens (strain PA1) (Methylobacterium extorquens).